Consider the following 347-residue polypeptide: MNKELLDDILSLEDKAVSEIENASSLQDLEKVRLSYLGKKGVIKAYFDNLKEIEDAGKKRNLGEVINVLRNKLDQLIMSKENILKAEEVNFKLQNEAVDITLSARPEKIGKVHPLSKVLNEVKLIFAHMGFKAVDGPDIEDEFHVFDALNTPSHHPAREEQDTFYLKNKIDDKRMVLRTHTSSVQIRTMEKTKKFPIKIVAAGRVYRNDFDATHTPMFHQIEGLYVDENVNMGQLKFTIHHFLNKFFGDKGLKIRFRNSFFPFTEPSAEVDISYKGSKWIEVLGCGMTHPNVFQNVGIDHTKYNGFAFGIGIERLAMLKYQISDLRSFYDNKISWLDHYGFHFSSLR.

Glutamate 265 provides a ligand contact to Mg(2+).

It belongs to the class-II aminoacyl-tRNA synthetase family. Phe-tRNA synthetase alpha subunit type 1 subfamily. As to quaternary structure, tetramer of two alpha and two beta subunits. It depends on Mg(2+) as a cofactor.

Its subcellular location is the cytoplasm. The catalysed reaction is tRNA(Phe) + L-phenylalanine + ATP = L-phenylalanyl-tRNA(Phe) + AMP + diphosphate + H(+). This Wolbachia pipientis wMel protein is Phenylalanine--tRNA ligase alpha subunit.